The sequence spans 29 residues: Vodo peptide N (29 aa).

The segment at residues 1 to 29 (GLPVCGETCTLGKCYTAGCSCSWPVCYRN) is a cross-link (cyclopeptide (Gly-Asn)). Disulfide bonds link C5–C19, C9–C21, and C14–C26.

In terms of processing, this is a cyclic peptide.

Probably participates in a plant defense mechanism. The polypeptide is Vodo peptide N (Viola odorata (Sweet violet)).